A 515-amino-acid polypeptide reads, in one-letter code: Bifunctional purine biosynthesis protein PurH (515 aa).

In terms of domain architecture, MGS-like spans 1-145 (MTKRALISVS…KNHASVTVVV (145 aa)).

Belongs to the PurH family.

It catalyses the reaction (6R)-10-formyltetrahydrofolate + 5-amino-1-(5-phospho-beta-D-ribosyl)imidazole-4-carboxamide = 5-formamido-1-(5-phospho-D-ribosyl)imidazole-4-carboxamide + (6S)-5,6,7,8-tetrahydrofolate. The enzyme catalyses IMP + H2O = 5-formamido-1-(5-phospho-D-ribosyl)imidazole-4-carboxamide. It functions in the pathway purine metabolism; IMP biosynthesis via de novo pathway; 5-formamido-1-(5-phospho-D-ribosyl)imidazole-4-carboxamide from 5-amino-1-(5-phospho-D-ribosyl)imidazole-4-carboxamide (10-formyl THF route): step 1/1. Its pathway is purine metabolism; IMP biosynthesis via de novo pathway; IMP from 5-formamido-1-(5-phospho-D-ribosyl)imidazole-4-carboxamide: step 1/1. This Streptococcus pyogenes serotype M6 (strain ATCC BAA-946 / MGAS10394) protein is Bifunctional purine biosynthesis protein PurH.